The following is a 565-amino-acid chain: Frizzled-2 (565 aa).

The signal sequence occupies residues 1-23 (MRPRSALPRLLLPLLLLPAAGPA). Over 24–247 (QFHGEKGISI…QEETRFARLW (224 aa)) the chain is Extracellular. Residues 34–153 (PDHGFCQPIS…HGAEQICVGQ (120 aa)) enclose the FZ domain. Cystine bridges form between Cys39–Cys100, Cys47–Cys93, Cys84–Cys121, Cys110–Cys150, and Cys114–Cys138. Residue Asn53 is glycosylated (N-linked (GlcNAc...) asparagine). The N-linked (GlcNAc...) asparagine glycan is linked to Asn154. Positions 160–189 (APALLTTAPPPGLQPGAGGTPGGPGGGGAP) are disordered. Gly residues predominate over residues 174 to 188 (PGAGGTPGGPGGGGA). A helical transmembrane segment spans residues 248-268 (ILTWSVLCCASTFFTVTTYLV). The Cytoplasmic portion of the chain corresponds to 269–279 (DMQRFRYPERP). Residues 280-300 (IIFLSGCYTMVSVAYIAGFVL) traverse the membrane as a helical segment. Residues 301-327 (QERVVCNERFSEDGYRTVVQGTKKEGC) are Extracellular-facing. A helical transmembrane segment spans residues 328–348 (TILFMMLYFFSMASSIWWVIL). Over 349 to 370 (SLTWFLAAGMKWGHEAIEANSQ) the chain is Cytoplasmic. Residues 371–391 (YFHLAAWAVPAVKTITILAMG) form a helical membrane-spanning segment. The Extracellular portion of the chain corresponds to 392–414 (QIDGDLLSGVCFVGLNSLDPLRG). A helical transmembrane segment spans residues 415–435 (FVLAPLFVYLFIGTSFLLAGF). The Cytoplasmic segment spans residues 436 to 461 (VSLFRIRTIMKHDGTKTEKLERLMVR). The helical transmembrane segment at 462–482 (IGVFSVLYTVPATIVIACYFY) threads the bilayer. At 483–519 (EQAFREHWERSWVSQHCKSLAIPCPAHYTPRMSPDFT) the chain is on the extracellular side. A helical transmembrane segment spans residues 520–540 (VYMIKYLMTLIVGITSGFWIW). Residues 541–565 (SGKTLHSWRKFYTRLTNSRHGETTV) are Cytoplasmic-facing. A Lys-Thr-X-X-X-Trp motif, mediates interaction with the PDZ domain of Dvl family members motif is present at residues 543-548 (KTLHSW). The PDZ-binding signature appears at 563–565 (TTV).

Belongs to the G-protein coupled receptor Fz/Smo family. (Microbial infection) Interacts with C.difficile toxin TcdB; frizzled receptors constitute the major host receptors for TcdB in the colonic epithelium. Post-translationally, ubiquitinated by ZNRF3, leading to its degradation by the proteasome. In terms of tissue distribution, widely expressed. In the adult, mainly found in heart, placenta, skeletal muscle, lung, kidney, pancreas, prostate, testis, ovary and colon. In the fetus, expressed in brain, lung and kidney. Low levels in fetal liver.

It is found in the membrane. The protein localises to the cell membrane. Its function is as follows. Receptor for Wnt proteins. Most of frizzled receptors are coupled to the beta-catenin canonical signaling pathway, which leads to the activation of disheveled proteins, inhibition of GSK-3 kinase, nuclear accumulation of beta-catenin and activation of Wnt target genes. A second signaling pathway involving PKC and calcium fluxes has been seen for some family members, but it is not yet clear if it represents a distinct pathway or if it can be integrated in the canonical pathway, as PKC seems to be required for Wnt-mediated inactivation of GSK-3 kinase. Both pathways seem to involve interactions with G-proteins. May be involved in transduction and intercellular transmission of polarity information during tissue morphogenesis and/or in differentiated tissues. Functionally, (Microbial infection) Acts as a receptor for C.difficile toxin TcdB in the colonic epithelium. TcdB occupies the binding site for Wnt-adducted palmitoleate in frizzled receptors and TcdB-binding prevents Wnt-binding and downstream Wnt signaling. This chain is Frizzled-2 (FZD2), found in Homo sapiens (Human).